The primary structure comprises 521 residues: Bifunctional purine biosynthesis protein PurH (521 aa).

Residues 1–149 enclose the MGS-like domain; that stretch reads MSDPVIKRAL…KNNESVTVVT (149 aa).

It belongs to the PurH family.

It catalyses the reaction (6R)-10-formyltetrahydrofolate + 5-amino-1-(5-phospho-beta-D-ribosyl)imidazole-4-carboxamide = 5-formamido-1-(5-phospho-D-ribosyl)imidazole-4-carboxamide + (6S)-5,6,7,8-tetrahydrofolate. The catalysed reaction is IMP + H2O = 5-formamido-1-(5-phospho-D-ribosyl)imidazole-4-carboxamide. It participates in purine metabolism; IMP biosynthesis via de novo pathway; 5-formamido-1-(5-phospho-D-ribosyl)imidazole-4-carboxamide from 5-amino-1-(5-phospho-D-ribosyl)imidazole-4-carboxamide (10-formyl THF route): step 1/1. Its pathway is purine metabolism; IMP biosynthesis via de novo pathway; IMP from 5-formamido-1-(5-phospho-D-ribosyl)imidazole-4-carboxamide: step 1/1. In Chlorobium phaeobacteroides (strain DSM 266 / SMG 266 / 2430), this protein is Bifunctional purine biosynthesis protein PurH.